Consider the following 176-residue polypeptide: Peptide methionine sulfoxide reductase B3 (176 aa).

The N-terminal stretch at 1–26 is a signal peptide; that stretch reads MNIVNSKILFLSFTLLLLLQSSIVES. The MsrB domain occupies 51–172; the sequence is DEEWRAILSP…NSVSLKFTPA (122 aa). Zn(2+)-binding residues include C90, C93, C136, and C139. The cysteines at positions 108 and 161 are disulfide-linked. C161 functions as the Nucleophile in the catalytic mechanism.

It belongs to the MsrB Met sulfoxide reductase family. Zn(2+) serves as cofactor.

The protein localises to the endoplasmic reticulum. The enzyme catalyses L-methionyl-[protein] + [thioredoxin]-disulfide + H2O = L-methionyl-(R)-S-oxide-[protein] + [thioredoxin]-dithiol. Functionally, catalyzes the reduction of methionine sulfoxide (MetSO) to methionine in proteins. Plays a protective role against oxidative stress by restoring activity to proteins that have been inactivated by methionine oxidation. Involved in cold tolerance. Eliminates MetSO and reactive oxygen species that accumulate at the ER during cold acclimation. MSRB family specifically reduces the MetSO R-enantiomer. This Arabidopsis thaliana (Mouse-ear cress) protein is Peptide methionine sulfoxide reductase B3 (MSRB3).